Reading from the N-terminus, the 575-residue chain is Glutathione hydrolase proenzyme (575 aa).

An N-terminal signal peptide occupies residues 1–24; sequence MKNQTFSKALLATALSCALFNVHA. Arginine 100 contacts L-glutamate. Catalysis depends on threonine 376, which acts as the Nucleophile. L-glutamate-binding positions include threonine 394, asparagine 396, glutamate 415, aspartate 418, 447–448, and 468–469; these read SS and GG.

The protein belongs to the gamma-glutamyltransferase family. This enzyme consists of two polypeptide chains, which are synthesized in precursor form from a single polypeptide. In terms of processing, cleaved by autocatalysis into a large and a small subunit.

Its subcellular location is the periplasm. It catalyses the reaction an N-terminal (5-L-glutamyl)-[peptide] + an alpha-amino acid = 5-L-glutamyl amino acid + an N-terminal L-alpha-aminoacyl-[peptide]. The enzyme catalyses glutathione + H2O = L-cysteinylglycine + L-glutamate. The catalysed reaction is an S-substituted glutathione + H2O = an S-substituted L-cysteinylglycine + L-glutamate. It functions in the pathway sulfur metabolism; glutathione metabolism. The sequence is that of Glutathione hydrolase proenzyme (ggt) from Pseudomonas sp. (strain A14).